A 402-amino-acid polypeptide reads, in one-letter code: Beta sliding clamp (402 aa).

Belongs to the beta sliding clamp family. As to quaternary structure, forms a ring-shaped head-to-tail homodimer around DNA which binds and tethers DNA polymerases and other proteins to the DNA. The DNA replisome complex has a single clamp-loading complex (3 tau and 1 each of delta, delta', psi and chi subunits) which binds 3 Pol III cores (1 core on the leading strand and 2 on the lagging strand) each with a beta sliding clamp dimer. Additional proteins in the replisome are other copies of gamma, psi and chi, Ssb, DNA helicase and RNA primase.

It localises to the cytoplasm. In terms of biological role, confers DNA tethering and processivity to DNA polymerases and other proteins. Acts as a clamp, forming a ring around DNA (a reaction catalyzed by the clamp-loading complex) which diffuses in an ATP-independent manner freely and bidirectionally along dsDNA. Initially characterized for its ability to contact the catalytic subunit of DNA polymerase III (Pol III), a complex, multichain enzyme responsible for most of the replicative synthesis in bacteria; Pol III exhibits 3'-5' exonuclease proofreading activity. The beta chain is required for initiation of replication as well as for processivity of DNA replication. This is Beta sliding clamp (dnaN) from Mycobacterium tuberculosis (strain CDC 1551 / Oshkosh).